A 705-amino-acid chain; its full sequence is Polyribonucleotide nucleotidyltransferase (705 aa).

Aspartate 487 and aspartate 493 together coordinate Mg(2+). The KH domain occupies 554-613 (PKILTMAIEPDKIRDVIGPSGKQINQIIDETGVKIDIEQDGSIFISSTDNEMNKKAKQII). In terms of domain architecture, S1 motif spans 623–691 (GQIYLGKVKR…RQGRVNLSRK (69 aa)).

It belongs to the polyribonucleotide nucleotidyltransferase family. Requires Mg(2+) as cofactor.

The protein resides in the cytoplasm. The catalysed reaction is RNA(n+1) + phosphate = RNA(n) + a ribonucleoside 5'-diphosphate. Functionally, involved in mRNA degradation. Catalyzes the phosphorolysis of single-stranded polyribonucleotides processively in the 3'- to 5'-direction. The chain is Polyribonucleotide nucleotidyltransferase from Oceanobacillus iheyensis (strain DSM 14371 / CIP 107618 / JCM 11309 / KCTC 3954 / HTE831).